Reading from the N-terminus, the 135-residue chain is ATP synthase epsilon chain, chloroplastic (135 aa).

Belongs to the ATPase epsilon chain family. As to quaternary structure, F-type ATPases have 2 components, CF(1) - the catalytic core - and CF(0) - the membrane proton channel. CF(1) has five subunits: alpha(3), beta(3), gamma(1), delta(1), epsilon(1). CF(0) has three main subunits: a, b and c.

Its subcellular location is the plastid. It is found in the chloroplast thylakoid membrane. Its function is as follows. Produces ATP from ADP in the presence of a proton gradient across the membrane. The sequence is that of ATP synthase epsilon chain, chloroplastic from Marchantia polymorpha (Common liverwort).